The chain runs to 444 residues: Coagulation factor VII (444 aa).

A signal peptide spans 1 to 21; that stretch reads MAPQARGLGLCSLLALQASLA. Positions 22–39 are excised as a propeptide; it reads AVFITQEEAHSVLRRQRR. Positions 40-84 constitute a Gla domain; the sequence is ANSFLEELRPGSLERECKEELCSFEEAREVFQSTERTKQFWITYN. 4-carboxyglutamate occurs at positions 45, 46, 53, 55, 58, 59, 64, 65, 68, and 74. C56 and C61 form a disulfide bridge. The 37-residue stretch at 85 to 121 folds into the EGF-like 1; calcium-binding domain; sequence DGDQCASNPCQNGGSCEDQIQSYICFCLADFEGRNCE. 9 disulfides stabilise this stretch: C89–C100, C94–C109, C111–C120, C130–C141, C137–C151, C153–C166, C174–C301, C198–C203, and C217–C233. S91 carries O-linked (Glc...) serine; alternate glycosylation. The O-linked (Xyl...) serine; alternate glycan is linked to S91. O-linked (Fuc) serine glycosylation occurs at S99. D102 carries the post-translational modification (3R)-3-hydroxyaspartate. In terms of domain architecture, EGF-like 2 spans 126–167; sequence DQLICMYENGGCEQYCSDHVGSQRSCRCHEGYTLLPNGVSCT. In terms of domain architecture, Peptidase S1 spans 192-431; the sequence is IVGGKVCPKG…YTEWLSRLMR (240 aa). N211 is a glycosylation site (N-linked (GlcNAc...) asparagine). The active-site Charge relay system is the H232. N-linked (GlcNAc...) asparagine glycosylation is present at N242. Residue D281 is the Charge relay system of the active site. The N-linked (GlcNAc...) asparagine glycan is linked to N306. C349 and C368 form a disulfide bridge. D377 contacts substrate. A disulfide bridge connects residues C379 and C407. S383 acts as the Charge relay system in catalysis.

The protein belongs to the peptidase S1 family. In terms of assembly, heterodimer of a light chain and a heavy chain linked by a disulfide bond. Post-translationally, the vitamin K-dependent, enzymatic carboxylation of some glutamate residues allows the modified protein to bind calcium. The iron and 2-oxoglutarate dependent 3-hydroxylation of aspartate and asparagine is (R) stereospecific within EGF domains. In terms of processing, O-glycosylated. O-fucosylated by POFUT1 on a conserved serine or threonine residue found in the consensus sequence C2-X(4,5)-[S/T]-C3 of EGF domains, where C2 and C3 are the second and third conserved cysteines. Post-translationally, can be either O-glucosylated or O-xylosylated at Ser-91 by POGLUT1. As to expression, plasma.

Its subcellular location is the secreted. The catalysed reaction is Selective cleavage of Arg-|-Ile bond in factor X to form factor Xa.. Functionally, initiates the extrinsic pathway of blood coagulation. Serine protease that circulates in the blood in a zymogen form. Factor VII is converted to factor VIIa by factor Xa, factor XIIa, factor IXa, or thrombin by minor proteolysis. In the presence of tissue factor and calcium ions, factor VIIa then converts factor X to factor Xa by limited proteolysis. Factor VIIa also converts factor IX to factor IXa in the presence of tissue factor and calcium. The chain is Coagulation factor VII (F7) from Oryctolagus cuniculus (Rabbit).